The chain runs to 448 residues: Signal recognition particle protein (448 aa).

GTP is bound by residues 101 to 108 (GLQGSGKT), 182 to 186 (DSAGR), and 240 to 243 (SKFD).

This sequence belongs to the GTP-binding SRP family. SRP54 subfamily. In terms of assembly, part of the signal recognition particle protein translocation system, which is composed of SRP and FtsY. SRP is a ribonucleoprotein composed of Ffh and a 4.5S RNA molecule.

The protein localises to the cytoplasm. It carries out the reaction GTP + H2O = GDP + phosphate + H(+). In terms of biological role, involved in targeting and insertion of nascent membrane proteins into the cytoplasmic membrane. Binds to the hydrophobic signal sequence of the ribosome-nascent chain (RNC) as it emerges from the ribosomes. The SRP-RNC complex is then targeted to the cytoplasmic membrane where it interacts with the SRP receptor FtsY. Interaction with FtsY leads to the transfer of the RNC complex to the Sec translocase for insertion into the membrane, the hydrolysis of GTP by both Ffh and FtsY, and the dissociation of the SRP-FtsY complex into the individual components. In Helicobacter pylori (strain J99 / ATCC 700824) (Campylobacter pylori J99), this protein is Signal recognition particle protein.